Consider the following 202-residue polypeptide: Nucleoside triphosphate pyrophosphatase (202 aa).

The active-site Proton acceptor is the aspartate 77.

The protein belongs to the Maf family. A divalent metal cation serves as cofactor.

Its subcellular location is the cytoplasm. The enzyme catalyses a ribonucleoside 5'-triphosphate + H2O = a ribonucleoside 5'-phosphate + diphosphate + H(+). It carries out the reaction a 2'-deoxyribonucleoside 5'-triphosphate + H2O = a 2'-deoxyribonucleoside 5'-phosphate + diphosphate + H(+). Nucleoside triphosphate pyrophosphatase. May have a dual role in cell division arrest and in preventing the incorporation of modified nucleotides into cellular nucleic acids. This is Nucleoside triphosphate pyrophosphatase from Rickettsia canadensis (strain McKiel).